Consider the following 385-residue polypeptide: 8-amino-7-oxononanoate synthase (385 aa).

R23 provides a ligand contact to substrate. Residue 110–111 participates in pyridoxal 5'-phosphate binding; the sequence is GF. H135 provides a ligand contact to substrate. The pyridoxal 5'-phosphate site is built by S180, H208, and T234. K237 is modified (N6-(pyridoxal phosphate)lysine). T350 lines the substrate pocket.

It belongs to the class-II pyridoxal-phosphate-dependent aminotransferase family. BioF subfamily. Homodimer. Pyridoxal 5'-phosphate serves as cofactor.

The enzyme catalyses 6-carboxyhexanoyl-[ACP] + L-alanine + H(+) = (8S)-8-amino-7-oxononanoate + holo-[ACP] + CO2. Its pathway is cofactor biosynthesis; biotin biosynthesis. Functionally, catalyzes the decarboxylative condensation of pimeloyl-[acyl-carrier protein] and L-alanine to produce 8-amino-7-oxononanoate (AON), [acyl-carrier protein], and carbon dioxide. The polypeptide is 8-amino-7-oxononanoate synthase (Vibrio vulnificus (strain CMCP6)).